Consider the following 311-residue polypeptide: Asialoglycoprotein receptor 2 (311 aa).

The tract at residues 1-44 (MAKDFQDIQQLSSEENDHPFHQGEGPGTRRLNPRRGNPFLKGPP) is disordered. Topologically, residues 1-58 (MAKDFQDIQQLSSEENDHPFHQGEGPGTRRLNPRRGNPFLKGPPPAQPLAQRLCSMVC) are cytoplasmic. The Endocytosis signal signature appears at 5–8 (FQDI). At Ser13 the chain carries Phosphoserine. A lipid anchor (S-palmitoyl cysteine) is attached at Cys54. The helical; Signal-anchor for type II membrane protein transmembrane segment at 59–79 (FSLLALSFNILLLVVICVTGS) threads the bilayer. At 80–311 (QSEGHGGAQL…KRRNATGEVA (232 aa)) the chain is on the extracellular side. N-linked (GlcNAc...) asparagine glycans are attached at residues Asn102 and Asn170. One can recognise a C-type lectin domain in the interval 176–302 (CCPVNWVEHQ…LQVYRWVCEK (127 aa)). Disulfide bonds link Cys177–Cys188, Cys205–Cys300, and Cys278–Cys292. Asn305 is a glycosylation site (N-linked (GlcNAc...) asparagine).

In terms of assembly, the functioning ligand-binding unit of this receptor is thought to be at least a dimer. Interacts with LASS2. As to quaternary structure, (Microbial infection) Interacts with hepatitis E virus capsid protein ORF2. Expressed exclusively in hepatic parenchymal cells.

The protein localises to the membrane. Its function is as follows. Mediates the endocytosis of plasma glycoproteins to which the terminal sialic acid residue on their complex carbohydrate moieties has been removed. The receptor recognizes terminal galactose and N-acetylgalactosamine units. After ligand binding to the receptor, the resulting complex is internalized and transported to a sorting organelle, where receptor and ligand are disassociated. The receptor then returns to the cell membrane surface. This chain is Asialoglycoprotein receptor 2 (ASGR2), found in Homo sapiens (Human).